We begin with the raw amino-acid sequence, 155 residues long: Small ribosomal subunit protein uS7cz/uS7cy (155 aa).

Component of the chloroplast small ribosomal subunit (SSU). Mature 70S chloroplast ribosomes of higher plants consist of a small (30S) and a large (50S) subunit. The 30S small subunit contains 1 molecule of ribosomal RNA (16S rRNA) and 24 different proteins. The 50S large subunit contains 3 rRNA molecules (23S, 5S and 4.5S rRNA) and 33 different proteins.

The protein resides in the plastid. The protein localises to the chloroplast. In terms of biological role, component of the chloroplast ribosome (chloro-ribosome), a dedicated translation machinery responsible for the synthesis of chloroplast genome-encoded proteins, including proteins of the transcription and translation machinery and components of the photosynthetic apparatus. This chain is Small ribosomal subunit protein uS7cz/uS7cy (rps7-A), found in Spinacia oleracea (Spinach).